A 271-amino-acid chain; its full sequence is Glutamate racemase (271 aa).

Substrate is bound by residues 10-11 (DS) and 42-43 (YG). The Proton donor/acceptor role is filled by C73. A substrate-binding site is contributed by 74-75 (NT). C183 acts as the Proton donor/acceptor in catalysis. Position 184-185 (184-185 (TH)) interacts with substrate.

It belongs to the aspartate/glutamate racemases family.

The catalysed reaction is L-glutamate = D-glutamate. The protein operates within cell wall biogenesis; peptidoglycan biosynthesis. Provides the (R)-glutamate required for cell wall biosynthesis. This Streptococcus thermophilus (strain ATCC BAA-250 / LMG 18311) protein is Glutamate racemase.